The following is a 346-amino-acid chain: NADH-ubiquinone oxidoreductase chain 2 (346 aa).

A run of 11 helical transmembrane segments spans residues 1–21, 26–46, 60–80, 96–116, 122–142, 151–171, 178–198, 199–219, 242–262, 274–294, and 320–340; these read MSPY…MLIS, WVFM…ILVW, FIVQ…SLSG, MMIM…YWVV, LNYI…LAVL, SSML…GGLG, LLAF…VAGS, LLGL…FSIL, VLLG…GFFG, LLLG…FYYL, and LSGL…LVGG.

This sequence belongs to the complex I subunit 2 family.

It localises to the mitochondrion inner membrane. It carries out the reaction a ubiquinone + NADH + 5 H(+)(in) = a ubiquinol + NAD(+) + 4 H(+)(out). Its function is as follows. Core subunit of the mitochondrial membrane respiratory chain NADH dehydrogenase (Complex I) that is believed to belong to the minimal assembly required for catalysis. Complex I functions in the transfer of electrons from NADH to the respiratory chain. The immediate electron acceptor for the enzyme is believed to be ubiquinone. This chain is NADH-ubiquinone oxidoreductase chain 2 (ND2), found in Branchiostoma lanceolatum (Common lancelet).